Consider the following 281-residue polypeptide: tRNA uridine(34) hydroxylase (281 aa).

The region spanning 125 to 222 (AREDVKTIDT…YFLKTKNKDG (98 aa)) is the Rhodanese domain. The Cysteine persulfide intermediate role is filled by Cys-182.

This sequence belongs to the TrhO family.

It carries out the reaction uridine(34) in tRNA + AH2 + O2 = 5-hydroxyuridine(34) in tRNA + A + H2O. Its function is as follows. Catalyzes oxygen-dependent 5-hydroxyuridine (ho5U) modification at position 34 in tRNAs. This is tRNA uridine(34) hydroxylase from Neorickettsia sennetsu (strain ATCC VR-367 / Miyayama) (Ehrlichia sennetsu).